The chain runs to 4194 residues: Hybrid PKS-NRPS synthetase pydA (4194 aa).

In terms of domain architecture, Ketosynthase family 3 (KS3) spans 14–450 (REPIAVVGSG…GTNAHAIVEN (437 aa)). Catalysis depends on for beta-ketoacyl synthase activity residues Cys-187, His-326, and His-370. The Malonyl-CoA:ACP transacylase (MAT) domain occupies 565–887 (VFTGQGAQWA…QRGKDDVQAF (323 aa)). The segment at 953–1088 (HPLLGTRTTD…GRVIVITGEA (136 aa)) is N-terminal hotdog fold. The region spanning 953–1257 (HPLLGTRTTD…VVSFSEPTAE (305 aa)) is the PKS/mFAS DH domain. His-985 functions as the Proton acceptor; for dehydratase activity in the catalytic mechanism. A C-terminal hotdog fold region spans residues 1103 to 1257 (LVDIPEDRFY…VVSFSEPTAE (155 aa)). The Proton donor; for dehydratase activity role is filled by Asp-1163. Residues 1302–1596 (YMRQLASLFP…FSGVDSTTHE (295 aa)) form a methyltransferase (cMeT) domain region. A Ketoreductase (KR) domain is found at 2141 to 2314 (TYVFFGLTSD…AGSILHIGAV (174 aa)). The Carrier 1 domain maps to 2421-2505 (TTAEEALEIV…ELVEFAVENM (85 aa)). Residue Ser-2465 is modified to O-(pantetheine 4'-phosphoryl)serine. A disordered region spans residues 2512 to 2583 (NMSDSLNAVP…ERDSSTASLE (72 aa)). A compositionally biased stretch (low complexity) spans 2526–2547 (APVIPASPPSGSVSSAPSSDPP). Over residues 2550–2565 (TAETSQHLSESSSKTS) the composition is skewed to polar residues. The segment covering 2566 to 2577 (QPDEKQSEERDS) has biased composition (basic and acidic residues). The segment at 2591–3023 (EKVLPVSPGQ…QILKDVSLFT (433 aa)) is condensation. The interval 3056–3467 (ANPPQEIALR…RIEGDTQIKL (412 aa)) is adenylation. The Carrier 2 domain maps to 3580 to 3660 (TQLTEAESEL…AMAAVIQDLS (81 aa)). Residue Ser-3620 is modified to O-(pantetheine 4'-phosphoryl)serine. The region spanning 3701 to 3920 (ITGATGFLGK…VDLISVERAA (220 aa)) is the Thioester reductase (TE) domain. Disordered stretches follow at residues 4031-4110 (RRDK…DEQI) and 4163-4194 (KGEY…EPDD). Over residues 4057 to 4072 (RGRDVSPRHPALDHPD) the composition is skewed to basic and acidic residues. The span at 4174–4183 (EEAEEAEWQC) shows a compositional bias: acidic residues. A compositionally biased stretch (basic and acidic residues) spans 4184 to 4194 (DEGHGDGEPDD).

It in the C-terminal section; belongs to the NRP synthetase family. It depends on pantetheine 4'-phosphate as a cofactor.

Its pathway is mycotoxin biosynthesis. Hybrid PKS-NRPS synthetase; part of the gene cluster that mediates the biosynthesis of pyrrocidines, fungal natural products containing a macrocyclic para-cyclophane connected to a decahydrofluorene ring system that show potent antibiotic activities toward Gram-negative bacteria. Within the pathway, the PKS-NRPS pydA, with the help of the trans-enoyl reductase pydC, synthesize the polyketide-tyrosyl acyl thioester product which can be reductively off-loaded by the terminal reductase (R) domain in pydA. The PKS module of pydA acts in combination with the trans-acting enoyl reductase pydC to produce a methylated polyketide attached to the ACP domain. In parallel, the adenylation (A) domain of the NRPS module activated L-tyrosine, which is then transferred to the ACP domain. The condensation (C) domain subsequently link this group to the polyketide chain, forming an enzyme-bound amide. The alpha/beta hydrolase pydG is then required to catalyze the subsequent Knoevenagel condensation that affords the 3-pyrrolin-2-one ring, whereas the four proteins pydB, pydE, pydX and pydZ then function synergistically to form the cyclophane. PydB and the membrane-bound pydX and pydZ are lipid-binding proteins that can sequester and mold the pdyG product into the inverse S-shape. Binding of the medium chain reductase pydE to the complex would trigger the cascade oxidative cyclization. PydY is involved in the Diels-Alder cycloaddition that forms the decahydrofluorene core. Additional non-enzymatic hydroxylation yields pyrrocidine A2 which can be further reduced into pyrrocidine B by an endogenous reductase. In Acremonium sp, this protein is Hybrid PKS-NRPS synthetase pydA.